Consider the following 269-residue polypeptide: Undecaprenyl-diphosphatase (269 aa).

Transmembrane regions (helical) follow at residues 40–59 (GITFDVALHLGTLIALALYF), 87–107 (WYIIAGCVPAAIVGKTLEEPI), 116–136 (AIIAAFLIGFGLLLALADTLG), 160–180 (ALLPGVSRSGITITAALFLGF), 188–208 (FSFLLSLPIVAGAALLKVGHL), 220–240 (PLLIGVGVSAVFGYVSVALLL), and 247–267 (SLYPFVWYRLLAGAGVLLFIF).

Belongs to the UppP family.

The protein localises to the cell inner membrane. The enzyme catalyses di-trans,octa-cis-undecaprenyl diphosphate + H2O = di-trans,octa-cis-undecaprenyl phosphate + phosphate + H(+). Catalyzes the dephosphorylation of undecaprenyl diphosphate (UPP). Confers resistance to bacitracin. The protein is Undecaprenyl-diphosphatase of Geobacter metallireducens (strain ATCC 53774 / DSM 7210 / GS-15).